Here is a 176-residue protein sequence, read N- to C-terminus: Small ribosomal subunit protein uS5 (176 aa).

One can recognise an S5 DRBM domain in the interval 18 to 81 (FEEKMLFVNR…SIARKNMISV (64 aa)).

Belongs to the universal ribosomal protein uS5 family. As to quaternary structure, part of the 30S ribosomal subunit. Contacts proteins S4 and S8.

Functionally, with S4 and S12 plays an important role in translational accuracy. Located at the back of the 30S subunit body where it stabilizes the conformation of the head with respect to the body. The polypeptide is Small ribosomal subunit protein uS5 (Deinococcus deserti (strain DSM 17065 / CIP 109153 / LMG 22923 / VCD115)).